A 378-amino-acid chain; its full sequence is UDP-N-acetylglucosamine--N-acetylmuramyl-(pentapeptide) pyrophosphoryl-undecaprenol N-acetylglucosamine transferase (378 aa).

Residues 14-16 (TGG), Asn125, Arg165, Ser193, and Gln293 each bind UDP-N-acetyl-alpha-D-glucosamine.

The protein belongs to the glycosyltransferase 28 family. MurG subfamily.

It localises to the cell inner membrane. It carries out the reaction di-trans,octa-cis-undecaprenyl diphospho-N-acetyl-alpha-D-muramoyl-L-alanyl-D-glutamyl-meso-2,6-diaminopimeloyl-D-alanyl-D-alanine + UDP-N-acetyl-alpha-D-glucosamine = di-trans,octa-cis-undecaprenyl diphospho-[N-acetyl-alpha-D-glucosaminyl-(1-&gt;4)]-N-acetyl-alpha-D-muramoyl-L-alanyl-D-glutamyl-meso-2,6-diaminopimeloyl-D-alanyl-D-alanine + UDP + H(+). Its pathway is cell wall biogenesis; peptidoglycan biosynthesis. Its function is as follows. Cell wall formation. Catalyzes the transfer of a GlcNAc subunit on undecaprenyl-pyrophosphoryl-MurNAc-pentapeptide (lipid intermediate I) to form undecaprenyl-pyrophosphoryl-MurNAc-(pentapeptide)GlcNAc (lipid intermediate II). The protein is UDP-N-acetylglucosamine--N-acetylmuramyl-(pentapeptide) pyrophosphoryl-undecaprenol N-acetylglucosamine transferase of Bartonella bacilliformis (strain ATCC 35685 / KC583 / Herrer 020/F12,63).